Here is a 340-residue protein sequence, read N- to C-terminus: Deubiquitinase SseL (340 aa).

His-222 is an active-site residue. Cys-284 (nucleophile) is an active-site residue.

The protein belongs to the peptidase C79 family.

The protein resides in the secreted. The protein localises to the host cytoplasm. Its function is as follows. Effector proteins function to alter host cell physiology and promote bacterial survival in host tissues. This protease targets the host cell ubiquitin pathway by acting as a deubiquitinase in infected host cells. This chain is Deubiquitinase SseL (sseL), found in Salmonella arizonae (strain ATCC BAA-731 / CDC346-86 / RSK2980).